We begin with the raw amino-acid sequence, 152 residues long: Protein-export protein SecB (152 aa).

Belongs to the SecB family. Homotetramer, a dimer of dimers. One homotetramer interacts with 1 SecA dimer.

The protein resides in the cytoplasm. Its function is as follows. One of the proteins required for the normal export of preproteins out of the cell cytoplasm. It is a molecular chaperone that binds to a subset of precursor proteins, maintaining them in a translocation-competent state. It also specifically binds to its receptor SecA. The sequence is that of Protein-export protein SecB from Thiobacillus denitrificans (strain ATCC 25259 / T1).